Reading from the N-terminus, the 355-residue chain is MPTAIELAEQFQASLVGEAPHGFTGLAPLERAQSNQISFLSNLLYRQQASESAAGALIVSQSDLDFLQANPGANSVKRVYFVAKNPYTTFARMAQYFAKANDPIYASGIHPSAVIDSTAIVPPSCHIGPFVQIGAGVKLGERVSILGNSSIAKDSVIASDTLIYPSVSIYHNTQIGERCIIHSGAVIGADGFGFAPDFSATGGEWVKIPQTGRVVISNDVEIGASTTIDRGAMSDTVIGAGTKIDNQVQIAHNVIVGSCCVIAGCAAISGSTKIGNFCIIGGAANFAGHLTIADRTTVSGNTSIIRSITEPGQHFTGVYPSMLHGAWEKNAAILRGLDKIRQRLRLLDKNKNSGS.

The active-site Proton acceptor is the H252.

It belongs to the transferase hexapeptide repeat family. LpxD subfamily. Homotrimer.

The catalysed reaction is a UDP-3-O-[(3R)-3-hydroxyacyl]-alpha-D-glucosamine + a (3R)-hydroxyacyl-[ACP] = a UDP-2-N,3-O-bis[(3R)-3-hydroxyacyl]-alpha-D-glucosamine + holo-[ACP] + H(+). The protein operates within bacterial outer membrane biogenesis; LPS lipid A biosynthesis. Catalyzes the N-acylation of UDP-3-O-acylglucosamine using 3-hydroxyacyl-ACP as the acyl donor. Is involved in the biosynthesis of lipid A, a phosphorylated glycolipid that anchors the lipopolysaccharide to the outer membrane of the cell. The polypeptide is UDP-3-O-acylglucosamine N-acyltransferase (Polynucleobacter necessarius subsp. necessarius (strain STIR1)).